Consider the following 154-residue polypeptide: uncharacterized protein (154 aa).

Belongs to the MG032/MG096/MG288 family.

This is an uncharacterized protein from Mycoplasma pneumoniae (strain ATCC 29342 / M129 / Subtype 1) (Mycoplasmoides pneumoniae).